A 373-amino-acid polypeptide reads, in one-letter code: Beta sliding clamp (373 aa).

The protein belongs to the beta sliding clamp family. As to quaternary structure, forms a ring-shaped head-to-tail homodimer around DNA which binds and tethers DNA polymerases and other proteins to the DNA. The DNA replisome complex has a single clamp-loading complex (3 tau and 1 each of delta, delta', psi and chi subunits) which binds 3 Pol III cores (1 core on the leading strand and 2 on the lagging strand) each with a beta sliding clamp dimer. Additional proteins in the replisome are other copies of gamma, psi and chi, Ssb, DNA helicase and RNA primase.

The protein localises to the cytoplasm. Its function is as follows. Confers DNA tethering and processivity to DNA polymerases and other proteins. Acts as a clamp, forming a ring around DNA (a reaction catalyzed by the clamp-loading complex) which diffuses in an ATP-independent manner freely and bidirectionally along dsDNA. Initially characterized for its ability to contact the catalytic subunit of DNA polymerase III (Pol III), a complex, multichain enzyme responsible for most of the replicative synthesis in bacteria; Pol III exhibits 3'-5' exonuclease proofreading activity. The beta chain is required for initiation of replication as well as for processivity of DNA replication. This is Beta sliding clamp (dnaN) from Mycoplasmopsis pulmonis (strain UAB CTIP) (Mycoplasma pulmonis).